A 349-amino-acid polypeptide reads, in one-letter code: MSKIDSVLIIGGSGFLGLHLIQQFFDINPKPDIHIFDVRDLPEKLSKQFTFNVDDIKFHKGDLTSPDDMENAINESKANVVVHCASPMHGQNPDIYDIVNVKGTRNVIDMCKKCGVNILVYTSSAGVIFNGQDVHNADETWPIPEVPMDAYNETKAIAEDMVLKANDPSSDFYTVALRPAGIFGPGDRQLVPGLRQVAKLGQSKFQIGDNNNLFDWTYAGNVADAHVLAAQKLLDPKTRTAVSGETFFITNDTPTYFWALARTVWKADGHIDKHVIVLKRPVAICAGYLSEWVSKMLGKEPGLTPFRVKIVCAYRYHNIAKAKKLLGYTPRVGIEEGINKTLAWMDEGL.

NADP(+) contacts are provided by residues 11-17, 62-63, and 84-86; these read GGSGFLG, DL, and CAS. Substrate contacts are provided by Ser-124 and Tyr-151. Residues Tyr-151, Lys-155, and 179 to 182 each bind NADP(+); that span reads PAGI. Lys-155 functions as the Proton donor in the catalytic mechanism.

This sequence belongs to the 3-beta-HSD family. Heterotetramer of ERG25, ERG26, ERG27 and ERG28. ERG28 acts as a scaffold to tether ERG27 and other 4,4-demethylation-related enzymes, forming a demethylation enzyme complex, in the endoplasmic reticulum.

Its subcellular location is the endoplasmic reticulum membrane. The catalysed reaction is 4beta-methylzymosterol-4alpha-carboxylate + NADP(+) = 3-dehydro-4-methylzymosterol + CO2 + NADPH. Its pathway is steroid biosynthesis; zymosterol biosynthesis; zymosterol from lanosterol: step 4/6. Its activity is regulated as follows. Inhibited by FR171456, a natural product with broad antifungal activity. Its function is as follows. Sterol-4-alpha-carboxylate 3-dehydrogenase; part of the third module of ergosterol biosynthesis pathway that includes the late steps of the pathway. ERG26 is a catalytic component of the C-4 demethylation complex that catalyzes the oxidative decarboxylation that results in a reduction of the 3-beta-hydroxy group at the C-3 carbon to an oxo group. The third module or late pathway involves the ergosterol synthesis itself through consecutive reactions that mainly occur in the endoplasmic reticulum (ER) membrane. Firstly, the squalene synthase ERG9 catalyzes the condensation of 2 farnesyl pyrophosphate moieties to form squalene, which is the precursor of all steroids. Squalene synthase is crucial for balancing the incorporation of farnesyl diphosphate (FPP) into sterol and nonsterol isoprene synthesis. Secondly, the squalene epoxidase ERG1 catalyzes the stereospecific oxidation of squalene to (S)-2,3-epoxysqualene, which is considered to be a rate-limiting enzyme in steroid biosynthesis. Then, the lanosterol synthase ERG7 catalyzes the cyclization of (S)-2,3 oxidosqualene to lanosterol, a reaction that forms the sterol core. In the next steps, lanosterol is transformed to zymosterol through a complex process involving various demethylation, reduction and desaturation reactions. The lanosterol 14-alpha-demethylase ERG11 (also known as CYP51) catalyzes C14-demethylation of lanosterol to produce 4,4'-dimethyl cholesta-8,14,24-triene-3-beta-ol, which is critical for ergosterol biosynthesis. The C-14 reductase ERG24 reduces the C14=C15 double bond of 4,4-dimethyl-cholesta-8,14,24-trienol to produce 4,4-dimethyl-cholesta-8,24-dienol. 4,4-dimethyl-cholesta-8,24-dienol is substrate of the C-4 demethylation complex ERG25-ERG26-ERG27 in which ERG25 catalyzes the three-step monooxygenation required for the demethylation of 4,4-dimethyl and 4alpha-methylsterols, ERG26 catalyzes the oxidative decarboxylation that results in a reduction of the 3-beta-hydroxy group at the C-3 carbon to an oxo group, and ERG27 is responsible for the reduction of the keto group on the C-3. ERG28 has a role as a scaffold to help anchor ERG25, ERG26 and ERG27 to the endoplasmic reticulum and ERG29 regulates the activity of the iron-containing C4-methylsterol oxidase ERG25. Then, the sterol 24-C-methyltransferase ERG6 catalyzes the methyl transfer from S-adenosyl-methionine to the C-24 of zymosterol to form fecosterol. The C-8 sterol isomerase ERG2 catalyzes the reaction which results in unsaturation at C-7 in the B ring of sterols and thus converts fecosterol to episterol. The sterol-C5-desaturase ERG3 then catalyzes the introduction of a C-5 double bond in the B ring to produce 5-dehydroepisterol. The C-22 sterol desaturase ERG5 further converts 5-dehydroepisterol into ergosta-5,7,22,24(28)-tetraen-3beta-ol by forming the C-22(23) double bond in the sterol side chain. Finally, ergosta-5,7,22,24(28)-tetraen-3beta-ol is substrate of the C-24(28) sterol reductase ERG4 to produce ergosterol. This chain is Sterol-4-alpha-carboxylate 3-dehydrogenase ERG26, decarboxylating, found in Saccharomyces cerevisiae (strain ATCC 204508 / S288c) (Baker's yeast).